The chain runs to 98 residues: NADH-ubiquinone oxidoreductase chain 4L (98 aa).

Transmembrane regions (helical) follow at residues 1 to 21 (MSMV…GLLM), 29 to 49 (SLLC…LTIL), and 61 to 81 (IILL…LVMV).

This sequence belongs to the complex I subunit 4L family. Core subunit of respiratory chain NADH dehydrogenase (Complex I) which is composed of 45 different subunits.

It localises to the mitochondrion inner membrane. The enzyme catalyses a ubiquinone + NADH + 5 H(+)(in) = a ubiquinol + NAD(+) + 4 H(+)(out). Core subunit of the mitochondrial membrane respiratory chain NADH dehydrogenase (Complex I) which catalyzes electron transfer from NADH through the respiratory chain, using ubiquinone as an electron acceptor. Part of the enzyme membrane arm which is embedded in the lipid bilayer and involved in proton translocation. The sequence is that of NADH-ubiquinone oxidoreductase chain 4L (MT-ND4L) from Bos mutus grunniens (Wild yak).